The primary structure comprises 130 residues: Small ribosomal subunit protein uS8 (130 aa).

The protein belongs to the universal ribosomal protein uS8 family. Part of the 30S ribosomal subunit. Contacts proteins S5 and S12.

Functionally, one of the primary rRNA binding proteins, it binds directly to 16S rRNA central domain where it helps coordinate assembly of the platform of the 30S subunit. This chain is Small ribosomal subunit protein uS8, found in Saccharophagus degradans (strain 2-40 / ATCC 43961 / DSM 17024).